A 459-amino-acid chain; its full sequence is FAD-dependent monooxygenase nanF (459 aa).

FAD contacts are provided by glutamate 49, glycine 62, and arginine 121. Residues arginine 200 and tyrosine 230 contribute to the active site. 2 residues coordinate FAD: aspartate 327 and glycine 340.

The protein belongs to the paxM FAD-dependent monooxygenase family. FAD is required as a cofactor.

It participates in secondary metabolite biosynthesis. Its function is as follows. FAD-dependent monooxygenase; part of the gene cluster that mediates the biosynthesis of the benzazepine alkaloid nanangelenin A which contains an unprecedented 3,4-dihydro-1-benzazepine-2,5-dione-N-prenyl-N-acetoxy-anthranilamide scaffold. The first step of nanangelenin biosynthesis is catalyzed by the indoleamine 2,3-dioxygenase nanC which produces N-formyl-kynurenine through the catabolism of tryptophan. The two-module NRPS nanA then utilizes anthranilate (Ant) and L-kynurenine (L-Kyn) to assemble the dipeptide product nanangelenin B. The first adenylation domain of nanA (A1) loads anthranilate onto the T1 domain, while A2 loads kynurenine, generated through spontaneous nonenzymatic deformylation of the nanC-supplied N-formyl-kynurenine. The peptide bond formation between the tethered amino acids is catalyzed by the first condensation domain (C1) between anthranilate's carbonyl carbon and kynurenine's aliphatic primary amine. The second C domain (C2) catalyzes the final cyclization event between the aromatic amine of kynurenine and the tethered carbonyl carbon, yielding nanangelenin B. The terminal T3 domain enhances the catalytic efficiency of C2, suggesting the T2-tethered Ant-L-Kyn is transferred to T3 prior to cyclization by C2. Once released from nanA, nanangelenin B is then prenylated by the prenyltransferase nanD to form nanangelenin C. Nanangelenin C is then N-hydroxylated by the FAD-dependent monooxygenase nanF and further acetylated by the acetyltransferase nanB to yield nanangelenin F. Finally, the N-methyltransferase nanE methylates the amide nitrogen of 1-benzazepine to convert nanangelenin F into nanangelenin A. NanE is also able to methylate most of the intermediates of the pathway such as nanangelenin B and nanangelenin C to produce nanangelenin D and nanangelenin E, respectively. This Aspergillus nanangensis protein is FAD-dependent monooxygenase nanF.